A 180-amino-acid chain; its full sequence is Protein YOP1 (180 aa).

Position 2 is an N-acetylserine (Ser-2). The tract at residues 2–17 (SEYASSIHSQMKQFDT) is interaction with YIP1. Over 2 to 35 (SEYASSIHSQMKQFDTKYSGNRILQQLENKTNLP) the chain is Cytoplasmic. Residues 36 to 55 (KSYLVAGLGFAYLLLIFINV) form a helical membrane-spanning segment. Residues 56–57 (GG) lie on the Lumenal side of the membrane. Residues 58–78 (VGEILSNFAGFVLPAYLSLVA) form a helical membrane-spanning segment. Residues 79–88 (LKTPTSTDDT) lie on the Cytoplasmic side of the membrane. A helical membrane pass occupies residues 89-105 (QLLTYWIVFSFLSVIEF). The Lumenal segment spans residues 106–108 (WSK). A helical membrane pass occupies residues 109–127 (AILYLIPFYWFLKTVFLIY). Residues 128–180 (IALPQTGGARMIYQKIVAPLTDRYILRDVSKTEKDEIRASVNEASKATGASVH) lie on the Cytoplasmic side of the membrane.

It belongs to the DP1 family. In terms of assembly, oligomer. Interacts with YIP1.

The protein localises to the endoplasmic reticulum membrane. It localises to the golgi apparatus membrane. Required to generate and maintain the structure of the tubular endoplasmic reticulum network and the vacuole. Induces high curvature in membranes and causes membrane tubule formation. Involved in membrane/vesicle trafficking. This chain is Protein YOP1 (YOP1), found in Saccharomyces cerevisiae (strain ATCC 204508 / S288c) (Baker's yeast).